We begin with the raw amino-acid sequence, 901 residues long: Protein translocase subunit SecA (901 aa).

ATP contacts are provided by residues Gln87, 105–109 (GEGKT), and Asp512. The tract at residues 858–891 (SHQDDDTAAAAALAAQTGDRKVGRNDPCPCGSGK) is disordered. Positions 885, 887, 896, and 897 each coordinate Zn(2+).

It belongs to the SecA family. As to quaternary structure, monomer and homodimer. Part of the essential Sec protein translocation apparatus which comprises SecA, SecYEG and auxiliary proteins SecDF-YajC and YidC. It depends on Zn(2+) as a cofactor.

It localises to the cell inner membrane. The protein localises to the cytoplasm. It carries out the reaction ATP + H2O + cellular proteinSide 1 = ADP + phosphate + cellular proteinSide 2.. In terms of biological role, part of the Sec protein translocase complex. Interacts with the SecYEG preprotein conducting channel. Has a central role in coupling the hydrolysis of ATP to the transfer of proteins into and across the cell membrane, serving both as a receptor for the preprotein-SecB complex and as an ATP-driven molecular motor driving the stepwise translocation of polypeptide chains across the membrane. This is Protein translocase subunit SecA from Escherichia fergusonii (strain ATCC 35469 / DSM 13698 / CCUG 18766 / IAM 14443 / JCM 21226 / LMG 7866 / NBRC 102419 / NCTC 12128 / CDC 0568-73).